Here is a 511-residue protein sequence, read N- to C-terminus: Histidine ammonia-lyase (511 aa).

The 5-imidazolinone (Ala-Gly) cross-link spans 142-144; that stretch reads ASG. 2,3-didehydroalanine (Ser) is present on serine 143.

The protein belongs to the PAL/histidase family. Post-translationally, contains an active site 4-methylidene-imidazol-5-one (MIO), which is formed autocatalytically by cyclization and dehydration of residues Ala-Ser-Gly.

The protein localises to the cytoplasm. The enzyme catalyses L-histidine = trans-urocanate + NH4(+). It participates in amino-acid degradation; L-histidine degradation into L-glutamate; N-formimidoyl-L-glutamate from L-histidine: step 1/3. The chain is Histidine ammonia-lyase from Brucella suis (strain ATCC 23445 / NCTC 10510).